We begin with the raw amino-acid sequence, 279 residues long: MTQVYDGFVHLGFSNRNGRTISHKKYQEGNSRVSADNSDANGVPYYFLINMGGGFVEGEQYQVTIDVNKDAHALVTTQTPTYVYKCEKGQLTQQNTSITLEENSYLEYMADEVIPYLKSRYFQTSRIDMDKSAHLIYSDGVTAGWSHEDLPFQYHYFRNLTQIYQDNELVYSDQTLLEPEKQDMFKLGYFEGWRNYNSLVMVSPNIDEAFVKALQKHLEGLNLESDFAISSLDISGLVLRILGKTAEDNRRIIYSCADYFRQEIHGLTPLNLRKNDMRR.

It belongs to the UreD family. As to quaternary structure, ureD, UreF and UreG form a complex that acts as a GTP-hydrolysis-dependent molecular chaperone, activating the urease apoprotein by helping to assemble the nickel containing metallocenter of UreC. The UreE protein probably delivers the nickel.

The protein resides in the cytoplasm. In terms of biological role, required for maturation of urease via the functional incorporation of the urease nickel metallocenter. In Streptococcus thermophilus (strain ATCC BAA-250 / LMG 18311), this protein is Urease accessory protein UreD.